Reading from the N-terminus, the 90-residue chain is Conotoxin Mr22.1 (90 aa).

The signal sequence occupies residues 1-18 (MMTRVFFAMFFLMALTEG). Positions 19 to 49 (WPRLYDSDCVRGRNMHITCFKDQTCGLTVKR) are excised as a propeptide. Tryptophan 75 carries the post-translational modification 6'-bromotryptophan.

This sequence belongs to the E superfamily. Contains 4 disulfide bonds. As to expression, expressed by the venom duct.

Its subcellular location is the secreted. The sequence is that of Conotoxin Mr22.1 from Conus marmoreus (Marble cone).